The primary structure comprises 705 residues: Ovotransferrin (705 aa).

The signal sequence occupies residues methionine 1–alanine 19. 2 Transferrin-like domains span residues isoleucine 26–lysine 352 and isoleucine 364–threonine 689. 2 disulfides stabilise this stretch: cysteine 29–cysteine 64 and cysteine 39–cysteine 55. Residues aspartate 79 and tyrosine 111 each coordinate Fe(3+). 4 disulfide bridges follow: cysteine 134/cysteine 216, cysteine 179/cysteine 193, cysteine 190/cysteine 201, and cysteine 247/cysteine 261. 4 residues coordinate hydrogencarbonate: threonine 136, arginine 140, alanine 142, and glycine 143. Residue tyrosine 210 participates in Fe(3+) binding. Residue histidine 269 coordinates Fe(3+). The connecting region stretch occupies residues lysine 352 to arginine 360. 2 cysteine pairs are disulfide-bonded: cysteine 367/cysteine 399 and cysteine 377/cysteine 390. Fe(3+)-binding residues include aspartate 414 and tyrosine 450. 7 disulfide bridges follow: cysteine 424–cysteine 699, cysteine 440–cysteine 662, cysteine 473–cysteine 549, cysteine 497–cysteine 690, cysteine 507–cysteine 521, cysteine 518–cysteine 532, and cysteine 589–cysteine 603. Hydrogencarbonate-binding residues include threonine 475, arginine 479, alanine 481, and glycine 482. N-linked (GlcNAc...) asparagine glycosylation is present at asparagine 492. Tyrosine 543 contacts Fe(3+). Histidine 611 serves as a coordination point for Fe(3+).

Belongs to the transferrin family. As to quaternary structure, monomer. Different forms of hen transferrin are distinguished by their carbohydrate composition. Ovotransferrin and embryo serum transferrin but not adult serum transferrin, have bisecting N-acetylglucosamine. Transferrin secreted by embryo hepatocytes in primary culture is marked by the presence of (alpha1-6) fucosylation of the core N-acetylglucosamine. Serum transferrins also differ in the number of attached neuraminic acid residues. In both embryo forms, sialylation occurs on the Man (alpha 1-3)-linked antennae. As to expression, expressed in the magnum of the oviduct (at protein level).

The protein resides in the secreted. Transferrins are iron binding transport proteins which can bind two Fe(3+) ions in association with the binding of an anion, usually bicarbonate. Responsible for the transport of iron from sites of absorption and heme degradation to those of storage and utilization. There are two forms of hen transferrin, ovotransferrin, found in the ovoducts and, serum transferrin, secreted by the liver. Serum transferrin may also have a role in stimulating cell proliferation and is regulated by iron levels. Ovotransferrin has a bacteriostatic function and, is not controlled by iron levels. The sequence is that of Ovotransferrin from Gallus gallus (Chicken).